The sequence spans 362 residues: [LysW]-lysine hydrolase (362 aa).

Residue H69 coordinates Zn(2+). D71 is a catalytic residue. D94 is a Zn(2+) binding site. Residue E127 is the Proton acceptor of the active site. The Zn(2+) site is built by E128, E151, and H334.

Belongs to the peptidase M20A family. LysK subfamily. Zn(2+) serves as cofactor. Co(2+) is required as a cofactor.

The protein localises to the cytoplasm. It carries out the reaction [amino-group carrier protein]-C-terminal-gamma-(L-lysyl)-L-glutamate + H2O = [amino-group carrier protein]-C-terminal-L-glutamate + L-lysine. The protein operates within amino-acid biosynthesis; L-lysine biosynthesis via AAA pathway; L-lysine from L-alpha-aminoadipate (Thermus route): step 5/5. Catalyzes the release of L-lysine from [LysW]-gamma-L-lysine. The sequence is that of [LysW]-lysine hydrolase from Deinococcus radiodurans (strain ATCC 13939 / DSM 20539 / JCM 16871 / CCUG 27074 / LMG 4051 / NBRC 15346 / NCIMB 9279 / VKM B-1422 / R1).